The following is a 193-amino-acid chain: Large ribosomal subunit protein uL18 (193 aa).

This sequence belongs to the universal ribosomal protein uL18 family. Part of the 50S ribosomal subunit. Contacts the 5S and 23S rRNAs.

Its function is as follows. This is one of the proteins that bind and probably mediate the attachment of the 5S RNA into the large ribosomal subunit, where it forms part of the central protuberance. The chain is Large ribosomal subunit protein uL18 from Methanococcus maripaludis (strain DSM 14266 / JCM 13030 / NBRC 101832 / S2 / LL).